The primary structure comprises 108 residues: Tetrahydromethanopterin S-methyltransferase subunit B (108 aa).

The helical transmembrane segment at 81–101 threads the bilayer; the sequence is FFGFWISLSILTLGLILVIGL.

The protein belongs to the MtrB family. As to quaternary structure, the complex is composed of 8 subunits; MtrA, MtrB, MtrC, MtrD, MtrE, MtrF, MtrG and MtrH.

Its subcellular location is the cell membrane. The enzyme catalyses 5-methyl-5,6,7,8-tetrahydromethanopterin + coenzyme M + 2 Na(+)(in) = 5,6,7,8-tetrahydromethanopterin + methyl-coenzyme M + 2 Na(+)(out). It participates in one-carbon metabolism; methanogenesis from CO(2); methyl-coenzyme M from 5,10-methylene-5,6,7,8-tetrahydromethanopterin: step 2/2. In terms of biological role, part of a complex that catalyzes the formation of methyl-coenzyme M and tetrahydromethanopterin from coenzyme M and methyl-tetrahydromethanopterin. This is an energy-conserving, sodium-ion translocating step. The sequence is that of Tetrahydromethanopterin S-methyltransferase subunit B from Methanococcus aeolicus (strain ATCC BAA-1280 / DSM 17508 / OCM 812 / Nankai-3).